Here is a 309-residue protein sequence, read N- to C-terminus: Hydroxyacylglutathione hydrolase, mitochondrial (309 aa).

Residues 1-24 (MVLGRGSLCLRSLSVLGAACARRG) constitute a mitochondrion transit peptide. Lysine 90 carries the post-translational modification N6-acetyllysine. Histidine 103, histidine 105, aspartate 107, and histidine 108 together coordinate Zn(2+). Residue lysine 117 is modified to N6-acetyllysine. Residues histidine 159 and aspartate 183 each coordinate Zn(2+). Substrate contacts are provided by residues 192-194 (KFY) and 222-224 (HEY). Residue histidine 222 coordinates Zn(2+). Lysine 230 carries the N6-acetyllysine; alternate modification. An N6-succinyllysine; alternate modification is found at lysine 230. Residue 298–301 (RREK) coordinates substrate.

This sequence belongs to the metallo-beta-lactamase superfamily. Glyoxalase II family. Monomer. Zn(2+) is required as a cofactor. In terms of tissue distribution, strongly expressed in testis, skeletal muscle and heart. Weakly expressed in placenta, pancreas, spleen and peripheral blood leukocytes.

Its subcellular location is the mitochondrion matrix. It localises to the cytoplasm. It carries out the reaction an S-(2-hydroxyacyl)glutathione + H2O = a 2-hydroxy carboxylate + glutathione + H(+). It catalyses the reaction (R)-S-lactoylglutathione + H2O = (R)-lactate + glutathione + H(+). It functions in the pathway secondary metabolite metabolism; methylglyoxal degradation; (R)-lactate from methylglyoxal: step 2/2. In terms of biological role, thiolesterase that catalyzes the hydrolysis of S-D-lactoyl-glutathione to form glutathione and D-lactic acid. This Rattus norvegicus (Rat) protein is Hydroxyacylglutathione hydrolase, mitochondrial (Hagh).